A 448-amino-acid chain; its full sequence is Adenylosuccinate synthetase (448 aa).

GTP is bound by residues 36–42 and 64–66; these read GDEGKGK and GHT. Asp-37 serves as the catalytic Proton acceptor. Asp-37 and Gly-64 together coordinate Mg(2+). Residues 37 to 40, 62 to 65, Thr-154, Arg-168, Asn-246, Thr-261, and Arg-325 each bind IMP; these read DEGK and NAGH. His-65 serves as the catalytic Proton donor. 321 to 327 contributes to the substrate binding site; it reads VTTKRKR. Residues Arg-327, 353–355, and 436–438 contribute to the GTP site; these read KLD and GVG.

The protein belongs to the adenylosuccinate synthetase family. Homodimer. Requires Mg(2+) as cofactor.

The protein localises to the cytoplasm. It catalyses the reaction IMP + L-aspartate + GTP = N(6)-(1,2-dicarboxyethyl)-AMP + GDP + phosphate + 2 H(+). The protein operates within purine metabolism; AMP biosynthesis via de novo pathway; AMP from IMP: step 1/2. Plays an important role in the de novo pathway and in the salvage pathway of purine nucleotide biosynthesis. Catalyzes the first committed step in the biosynthesis of AMP from IMP. The protein is Adenylosuccinate synthetase of Drosophila persimilis (Fruit fly).